The following is a 376-amino-acid chain: 2-aminoethylphosphonate--pyruvate transaminase 2 (376 aa).

Lys194 is modified (N6-(pyridoxal phosphate)lysine).

Belongs to the class-V pyridoxal-phosphate-dependent aminotransferase family. PhnW subfamily. In terms of assembly, homodimer. Requires pyridoxal 5'-phosphate as cofactor.

It carries out the reaction (2-aminoethyl)phosphonate + pyruvate = phosphonoacetaldehyde + L-alanine. Involved in phosphonate degradation. The sequence is that of 2-aminoethylphosphonate--pyruvate transaminase 2 from Burkholderia lata (strain ATCC 17760 / DSM 23089 / LMG 22485 / NCIMB 9086 / R18194 / 383).